We begin with the raw amino-acid sequence, 404 residues long: 4-hydroxy-3-methylbut-2-en-1-yl diphosphate synthase (flavodoxin) (404 aa).

[4Fe-4S] cluster contacts are provided by C310, C313, C345, and E352.

This sequence belongs to the IspG family. The cofactor is [4Fe-4S] cluster.

The catalysed reaction is (2E)-4-hydroxy-3-methylbut-2-enyl diphosphate + oxidized [flavodoxin] + H2O + 2 H(+) = 2-C-methyl-D-erythritol 2,4-cyclic diphosphate + reduced [flavodoxin]. It participates in isoprenoid biosynthesis; isopentenyl diphosphate biosynthesis via DXP pathway; isopentenyl diphosphate from 1-deoxy-D-xylulose 5-phosphate: step 5/6. In terms of biological role, converts 2C-methyl-D-erythritol 2,4-cyclodiphosphate (ME-2,4cPP) into 1-hydroxy-2-methyl-2-(E)-butenyl 4-diphosphate. This is 4-hydroxy-3-methylbut-2-en-1-yl diphosphate synthase (flavodoxin) from Treponema pallidum (strain Nichols).